A 619-amino-acid chain; its full sequence is Translation initiation factor IF-2 (619 aa).

2 stretches are compositionally biased toward low complexity: residues 1 to 18 (MTLN…TTPK) and 98 to 111 (PPQL…LTKT). Disordered regions lie at residues 1–24 (MTLN…KETD) and 90–113 (SEPQ…KTKP). In terms of domain architecture, tr-type G spans 121 to 289 (KKSPIVTIMG…ILLVSEIQNL (169 aa)). The tract at residues 130–137 (GHVDHGKT) is G1. 130-137 (GHVDHGKT) lines the GTP pocket. Residues 155–159 (GITQH) are G2. Residues 176–179 (DTPG) form a G3 region. GTP is bound by residues 176–180 (DTPGH) and 230–233 (NKID). Residues 230-233 (NKID) are G4. A G5 region spans residues 266–268 (SAL).

This sequence belongs to the TRAFAC class translation factor GTPase superfamily. Classic translation factor GTPase family. IF-2 subfamily.

The protein resides in the cytoplasm. Functionally, one of the essential components for the initiation of protein synthesis. Protects formylmethionyl-tRNA from spontaneous hydrolysis and promotes its binding to the 30S ribosomal subunits. Also involved in the hydrolysis of GTP during the formation of the 70S ribosomal complex. The chain is Translation initiation factor IF-2 from Onion yellows phytoplasma (strain OY-M).